A 409-amino-acid polypeptide reads, in one-letter code: Lissencephaly-1 homolog (409 aa).

The LisH domain maps to 7–39 (QREELNQAIADYLGTNGYADSLEAFRKEADLST). Positions 54–81 (TSVIRLQKKVMELEAKLTEAEKEVIEGA) form a coiled coil. 7 WD repeats span residues 104–145 (GHRA…RSLK), 146–185 (GHTDSVQDVAFDAQGKLLVSCSADLSIKLWDFQQSYACVK), 189–228 (GHDHNVSSVAFVPAGDYVLSASRDRTIKMWEVATGYCVKT), 231–270 (GHREWVRMVRVHIEGSLFATCSNDHTIRVWLTNSKDCKVE), 273–332 (DHEH…CLLT), 335–374 (GHDNWVRGLAFHPGGKYLVSASDDKTIRVWDLRNKRCMKT), and 377–409 (AHQHFCTSIDFHKAHPYVISGSVDQTVKVWECR).

Belongs to the WD repeat LIS1/nudF family.

The protein resides in the cytoplasm. Its subcellular location is the cytoskeleton. It localises to the microtubule organizing center. It is found in the centrosome. In terms of biological role, positively regulates the activity of the minus-end directed microtubule motor protein dynein. May enhance dynein-mediated microtubule sliding by targeting dynein to the microtubule plus end. Required for several dynein- and microtubule-dependent processes. This Drosophila willistoni (Fruit fly) protein is Lissencephaly-1 homolog.